We begin with the raw amino-acid sequence, 166 residues long: S-phase kinase-associated protein 1 homolog (166 aa).

Residues 105-166 (ILAANYLDIK…ENKWAEEATS (62 aa)) are interaction with the F-box domain of F-box proteins.

This sequence belongs to the SKP1 family. As to quaternary structure, component of multiple SCF (SKP1-CUL1-F-box) E3 ubiquitin-protein ligase complexes formed of CUL1, SKP1, RBX1 and a variable F-box domain-containing protein as substrate-specific subunit.

It participates in protein modification; protein ubiquitination. In terms of biological role, essential component of the SCF (SKP1-CUL1-F-box protein) ubiquitin ligase complex, which mediates the ubiquitination of proteins involved in cell cycle progression, signal transduction and transcription. In the SCF complex, serves as an adapter that links the F-box protein to CUL1. The functional specificity of the SCF complex depends on the F-box protein as substrate recognition component. Its association with the holoenzyme telomerase ribonucleoprotein complex suggests that it may play a role in turnover of holoenzyme telomerase complex components. In Tetrahymena thermophila (strain SB210), this protein is S-phase kinase-associated protein 1 homolog.